Consider the following 72-residue polypeptide: MAGKIKKGALVRVVREKLENSLEATASDTRFPSYLFESKGEIVDMNDEYALLRFYTPTPNVWLRIDQLELVE.

This sequence belongs to the complex I NdhO subunit family. As to quaternary structure, NDH-1 can be composed of about 15 different subunits; different subcomplexes with different compositions have been identified which probably have different functions.

The protein localises to the cellular thylakoid membrane. It carries out the reaction a plastoquinone + NADH + (n+1) H(+)(in) = a plastoquinol + NAD(+) + n H(+)(out). The catalysed reaction is a plastoquinone + NADPH + (n+1) H(+)(in) = a plastoquinol + NADP(+) + n H(+)(out). In terms of biological role, NDH-1 shuttles electrons from an unknown electron donor, via FMN and iron-sulfur (Fe-S) centers, to quinones in the respiratory and/or the photosynthetic chain. The immediate electron acceptor for the enzyme in this species is believed to be plastoquinone. Couples the redox reaction to proton translocation, and thus conserves the redox energy in a proton gradient. Cyanobacterial NDH-1 also plays a role in inorganic carbon-concentration. This Gloeothece citriformis (strain PCC 7424) (Cyanothece sp. (strain PCC 7424)) protein is NAD(P)H-quinone oxidoreductase subunit O.